The following is a 233-amino-acid chain: Large ribosomal subunit protein uL1 (233 aa).

Belongs to the universal ribosomal protein uL1 family. As to quaternary structure, part of the 50S ribosomal subunit.

Its function is as follows. Binds directly to 23S rRNA. The L1 stalk is quite mobile in the ribosome, and is involved in E site tRNA release. In terms of biological role, protein L1 is also a translational repressor protein, it controls the translation of the L11 operon by binding to its mRNA. The polypeptide is Large ribosomal subunit protein uL1 (Proteus vulgaris).